The primary structure comprises 259 residues: Thiazole synthase (259 aa).

Lys100 acts as the Schiff-base intermediate with DXP in catalysis. 1-deoxy-D-xylulose 5-phosphate is bound by residues Gly161, 187 to 188 (AG), and 209 to 210 (AS).

It belongs to the ThiG family. Homotetramer. Forms heterodimers with either ThiH or ThiS.

The protein localises to the cytoplasm. The enzyme catalyses [ThiS sulfur-carrier protein]-C-terminal-Gly-aminoethanethioate + 2-iminoacetate + 1-deoxy-D-xylulose 5-phosphate = [ThiS sulfur-carrier protein]-C-terminal Gly-Gly + 2-[(2R,5Z)-2-carboxy-4-methylthiazol-5(2H)-ylidene]ethyl phosphate + 2 H2O + H(+). It participates in cofactor biosynthesis; thiamine diphosphate biosynthesis. Its function is as follows. Catalyzes the rearrangement of 1-deoxy-D-xylulose 5-phosphate (DXP) to produce the thiazole phosphate moiety of thiamine. Sulfur is provided by the thiocarboxylate moiety of the carrier protein ThiS. In vitro, sulfur can be provided by H(2)S. This is Thiazole synthase from Salinispora arenicola (strain CNS-205).